The primary structure comprises 353 residues: Trans-enoyl reductase eqxC (353 aa).

45–48 (VDTK) is a binding site for NADP(+). Residue 131–138 (ISFMTTGL) coordinates substrate. NADP(+)-binding positions include 166-169 (SSAT), 189-192 (SPRN), tyrosine 207, and 254-255 (LE). Position 275 to 279 (275 to 279 (GPQML)) interacts with substrate. 344–345 (IS) is an NADP(+) binding site.

Belongs to the zinc-containing alcohol dehydrogenase family. In terms of assembly, monomer.

It carries out the reaction L-serine + 7 malonyl-CoA + acetyl-CoA + 2 S-adenosyl-L-methionine + ATP + 8 NADPH + 11 H(+) = (5S)-3-[(2E,6R,8E,10E,12E)-2,6-dimethyltetradeca-2,8,10,12-tetraenoyl]-5-(hydroxymethyl)pyrrolidine-2,4-dione + AMP + 2 S-adenosyl-L-homocysteine + 7 CO2 + diphosphate + 8 NADP(+) + 8 CoA + 6 H2O. Its pathway is mycotoxin biosynthesis. Its function is as follows. Trans-enoyl reductase; part of the gene cluster that mediates the biosynthesis of equisetin, a trans-fused decalin-containing tetramic acid with antimicrobial activity. The PKS module of eqxS together with the enoylreductase eqxC catalyze the formation of the polyketide unit which is then conjugated to L-serine by the condensation domain of the eqxS NRPS module. Activity of the Dieckmann cyclase domain (RED) results in release of the Dieckmann product intermediate. Diels-Alderase eqx3 is involved in endo-selective Diels-Alder cycloaddition to form the decalin ring, leading to the production of N-desmethylequisetin also called trichosetin. Subsequent N-methylation is carried out by eqxD to give equisetin. This Fusarium heterosporum protein is Trans-enoyl reductase eqxC.